We begin with the raw amino-acid sequence, 483 residues long: Malonate-semialdehyde dehydrogenase 2 (483 aa).

NAD(+) contacts are provided by F152, K176, E179, R180, and S229. The active-site Nucleophile is C284. Position 384 (E384) interacts with NAD(+).

This sequence belongs to the aldehyde dehydrogenase family. IolA subfamily. Homotetramer.

It carries out the reaction 3-oxopropanoate + NAD(+) + CoA + H2O = hydrogencarbonate + acetyl-CoA + NADH + H(+). The enzyme catalyses 2-methyl-3-oxopropanoate + NAD(+) + CoA + H2O = propanoyl-CoA + hydrogencarbonate + NADH + H(+). The protein operates within polyol metabolism; myo-inositol degradation into acetyl-CoA; acetyl-CoA from myo-inositol: step 7/7. In terms of biological role, catalyzes the oxidation of malonate semialdehyde (MSA) and methylmalonate semialdehyde (MMSA) into acetyl-CoA and propanoyl-CoA, respectively. Is involved in a myo-inositol catabolic pathway. Bicarbonate, and not CO2, is the end-product of the enzymatic reaction. The polypeptide is Malonate-semialdehyde dehydrogenase 2 (Bacillus mycoides (strain KBAB4) (Bacillus weihenstephanensis)).